We begin with the raw amino-acid sequence, 469 residues long: Putative arginine/ornithine antiporter (469 aa).

12 helical membrane-spanning segments follow: residues 8–28 (GFWL…IFSL), 44–64 (AWLL…HLSI), 90–110 (AGFT…VAII), 144–164 (LTFA…VASI), 179–199 (VLGF…SLFG), 213–233 (IGIG…FVGI), 254–274 (ITGL…TMGV), 301–321 (VIMA…WILL), 347–367 (SPVI…FSVI), 375–395 (FTFL…VSAI), 417–437 (DGLI…TGTA), and 439–459 (LTTF…YPFV).

This sequence belongs to the amino acid-polyamine-organocation (APC) superfamily. Basic amino acid/polyamine antiporter (APA) (TC 2.A.3.2) family.

The protein resides in the cell membrane. The enzyme catalyses L-ornithine(in) + L-arginine(out) = L-ornithine(out) + L-arginine(in). Its function is as follows. Catalyzes electroneutral exchange between L-arginine and L-ornithine. The polypeptide is Putative arginine/ornithine antiporter (yvsH) (Bacillus subtilis (strain 168)).